Here is a 604-residue protein sequence, read N- to C-terminus: MENQAHNTMGTSPCEAELQELMEQIDIMVSNKKMDWERKMRALETRLDLRDQELANAQTCLDQKGQEVGLLRQKLDSLEKCNLAMTQNYEGQLQSLKAQFSKLTNNFEKLRLHQMKQNKVPRKELPHLKEEIPFELSNLNQKLEEFRAKSREWDKQEILYQTHLISLDAQQKLLSEKCNQFQKQAQSYQTQLNGKKQCLEDSSSEIPRLICDPDPNCEINERDEFIIEKLKSAVNEIALSRNKLQDENQKLLQELKMYQRQCQAMEAGLSEVKSELQSRDDLLRIIEMERLQLHRELLKIGECQNAQGNKTRLESSYLPSIKEPERKIKELFSVMQDQPNHEKELNKIRSQLQQVEEYHNSEQERMRNEISDLTEELHQKEITIATVTKKAALLEKQLKMELEIKEKMLAKQKVSDMKYKAVRTENTHLKGMMGDLDPGEYMSMDFTNREQSRHTSINKLQYENERLRNDLAKLHVNGKSTWTNQNTYEETGRYAYQSQIKVEQNEERLSHDCEPNRSTMPPLPPSTFQAKEMTSPLVSDDDVFPLSPPDMSFPASLAAQHFLLEEEKRAKELEKLLNTHIDELQRHTEFTLNKYSKLKQNRHI.

Coiled coils occupy residues 14-59 (CEAE…NAQT), 85-197 (MTQN…GKKQ), 226-278 (IIEK…ELQS), and 336-399 (QDQP…KQLK). S547 is subject to Phosphoserine. Positions 558–601 (AAQHFLLEEEKRAKELEKLLNTHIDELQRHTEFTLNKYSKLKQN) form a coiled coil.

The protein belongs to the CEP63 family. Interacts with CEP152; the interaction is mutually exclusive with CEP63.

The protein localises to the cytoplasm. Functionally, key structural component of the deuterosome, a structure that promotes de novo centriole amplification in multiciliated cells. Deuterosome-mediated centriole amplification occurs in terminally differentiated multiciliated cells and can generate more than 100 centrioles. Probably sufficient for the specification and formation of the deuterosome inner core. Interacts with CEP152 and recruits PLK4 to activate centriole biogenesis. This chain is Deuterosome assembly protein 1, found in Homo sapiens (Human).